Consider the following 573-residue polypeptide: MAASAADRMGRQRMSGLSCSAPPRPTVVTNPGNKQDGNYAPVLAEDEREAVALLLRYLENRGEVDFFSNGPLRALSTLVYSDNIDLQRSAALAFAEITEKDIRPVNRDCLEPVLLLLQNTDPDIQRAASAALGNLAVNNENKVLIVEMGGFEPLIRQMMSPNVEVQCNAVGCITNLATHEANKSKIARSGALLPLTKLAKSKDMRVQRNATGALLNMTHSDQNRQELVNAGAIPILVSLLSSRDPDVQYYSTTALSNIAVDESNRKKLSSSEPRLVEHLIKLMDSGSPRVQCQAALALRNLASDSDYQLEIVKANGLPHLFNLFQSTHTPLVLAAVACIRNISIHPLNETPIIEAGFLKTLVELLGASDNEEIQCHTISTLRNLAASSERNKLEIVEAGAVQKCKELVLDAPRLVQSEMTACLAVLALGDELKGTLLELGIAEVLIPLTLSDNIEVQGNSAAALGNLSSKVGNYDTFVNHWNEPSGGIREFLIRFLTSGDSTFGHIAVWTVLQLLESKDQRLKDLLKNSNEIVDAIHQLSSMNSDGADGDGEDMRDSKSEVVMLAKKVAPLLK.

Residues 1-36 (MAASAADRMGRQRMSGLSCSAPPRPTVVTNPGNKQD) form a disordered region. The span at 27–36 (VVTNPGNKQD) shows a compositional bias: polar residues. 9 ARM repeats span residues 60 to 97 (NRGEVDFFSNGPLRALSTLVYSDNIDLQRSAALAFAEI), 98 to 137 (TEKDIRPVNRDCLEPVLLLLQNTDPDIQRAASAALGNLAV), 139 to 178 (NENKVLIVEMGGFEPLIRQMMSPNVEVQCNAVGCITNLAT), 180 to 219 (EANKSKIARSGALLPLTKLAKSKDMRVQRNATGALLNMTH), 221 to 260 (DQNRQELVNAGAIPILVSLLSSRDPDVQYYSTTALSNIAV), 264 to 303 (NRKKLSSSEPRLVEHLIKLMDSGSPRVQCQAALALRNLAS), 305 to 344 (SDYQLEIVKANGLPHLFNLFQSTHTPLVLAAVACIRNISI), 346 to 386 (PLNE…NLAA), and 430 to 469 (DELKGTLLELGIAEVLIPLTLSDNIEVQGNSAAALGNLSS).

This sequence belongs to the beta-catenin family.

The protein resides in the vacuole membrane. Functionally, functions in both vacuole inheritance and protein targeting from the cytoplasm to vacuole. The polypeptide is Vacuolar protein 8 (VAC8) (Yarrowia lipolytica (strain CLIB 122 / E 150) (Yeast)).